Consider the following 782-residue polypeptide: Lysosome membrane protein 2-C (782 aa).

Residues 1 to 7 (MVANNKG) lie on the Cytoplasmic side of the membrane. The chain crosses the membrane as a helical span at residues 8–28 (LLIAGLLLSVIGAALFVISLA). The Lumenal segment spans residues 29–739 (LLPSVLNVAT…QQFKQIQTVK (711 aa)). N-linked (GlcNAc...) asparagine glycans are attached at residues Asn77, Asn105, Asn191, Asn219, Asn234, Asn243, Asn281, Asn368, Asn387, Asn401, Asn427, Asn432, Asn451, Asn465, Asn501, Asn536, Asn540, Asn595, Asn605, Asn613, Asn646, and Asn692. A helical membrane pass occupies residues 740-760 (IAPVVVVSIFGGILLIAGLVM). Topologically, residues 761 to 782 (AINGFRKTFYNNNQYNGYNIIN) are cytoplasmic. A Tyrosine-type lysosomal sorting signal motif is present at residues 777–781 (GYNII).

The protein belongs to the CD36 family. Post-translationally, heavily glycosylated.

It localises to the lysosome membrane. Its function is as follows. May act as a lysosomal receptor. May be involved role in macropinocytosis and fluid phase exocytosis. The protein is Lysosome membrane protein 2-C (lmpC) of Dictyostelium discoideum (Social amoeba).